The following is a 263-amino-acid chain: Post-GPI attachment to proteins factor 2 (263 aa).

6 consecutive transmembrane segments (helical) span residues 16 to 36 (FVICIGGLPSSALLICVILSL), 69 to 89 (YIWRILIGLHIGPRLVVAIAF), 109 to 129 (FLCNLACFLNLLENFFLLALT), 143 to 163 (CFGGFAICSIIYMLLSTWLFN), 180 to 200 (YKILGAAIFVLCFFLGAYLYW), and 208 to 228 (PGIYTLFALVEYSAVLSNIFF).

The protein belongs to the PGAP2 family.

It localises to the golgi apparatus membrane. The protein resides in the endoplasmic reticulum membrane. Its function is as follows. Involved in the lipid remodeling steps of GPI-anchor maturation. Required for stable expression of GPI-anchored proteins at the cell surface. This Caenorhabditis elegans protein is Post-GPI attachment to proteins factor 2.